The sequence spans 136 residues: Large ribosomal subunit protein uL16 (136 aa).

It belongs to the universal ribosomal protein uL16 family. As to quaternary structure, part of the 50S ribosomal subunit.

In terms of biological role, binds 23S rRNA and is also seen to make contacts with the A and possibly P site tRNAs. The protein is Large ribosomal subunit protein uL16 of Vibrio atlanticus (strain LGP32) (Vibrio splendidus (strain Mel32)).